Here is an 81-residue protein sequence, read N- to C-terminus: Cytochrome b559 subunit alpha (81 aa).

Residues 21–35 (VIHALTIPALFLAGW) traverse the membrane as a helical segment. Position 23 (His23) interacts with heme.

The protein belongs to the PsbE/PsbF family. Heterodimer of an alpha subunit and a beta subunit. PSII is composed of 1 copy each of membrane proteins PsbA, PsbB, PsbC, PsbD, PsbE, PsbF, PsbH, PsbI, PsbJ, PsbK, PsbL, PsbM, PsbT, PsbX, PsbY, PsbZ, Psb30/Ycf12, peripheral proteins PsbO, CyanoQ (PsbQ), PsbU, PsbV and a large number of cofactors. It forms dimeric complexes. It depends on heme b as a cofactor.

It localises to the cellular thylakoid membrane. This b-type cytochrome is tightly associated with the reaction center of photosystem II (PSII). PSII is a light-driven water:plastoquinone oxidoreductase that uses light energy to abstract electrons from H(2)O, generating O(2) and a proton gradient subsequently used for ATP formation. It consists of a core antenna complex that captures photons, and an electron transfer chain that converts photonic excitation into a charge separation. This is Cytochrome b559 subunit alpha from Synechococcus sp. (strain JA-2-3B'a(2-13)) (Cyanobacteria bacterium Yellowstone B-Prime).